The primary structure comprises 164 residues: HTH-type transcriptional regulator IscR (164 aa).

The HTH rrf2-type domain maps to 2–131 (RLTSKGRYAV…NNITLDELVN (130 aa)). Positions 28–51 (LADISERQGISLSYLEQLFSRLRK) form a DNA-binding region, H-T-H motif. [2Fe-2S] cluster-binding residues include cysteine 92, cysteine 98, and cysteine 104.

It depends on [2Fe-2S] cluster as a cofactor.

Regulates the transcription of several operons and genes involved in the biogenesis of Fe-S clusters and Fe-S-containing proteins. The sequence is that of HTH-type transcriptional regulator IscR from Pectobacterium carotovorum subsp. carotovorum (strain PC1).